Reading from the N-terminus, the 364-residue chain is Growth hormone secretagogue receptor type 1 (364 aa).

The Extracellular segment spans residues 1 to 40; the sequence is MWNATPSEEPEPNVTLDLDWDASPGNDSLSDELLPLFPAP. N-linked (GlcNAc...) asparagine glycosylation is found at N13 and N26. The helical transmembrane segment at 41–66 threads the bilayer; sequence LLAGVTATCVALFVVGISGNLLTMLV. At 67-72 the chain is on the cytoplasmic side; sequence VSRFRE. A helical membrane pass occupies residues 73 to 96; it reads LRTTTNLYLSSMAFSDLLIFLCMP. The Extracellular segment spans residues 97–117; sequence LDLVRLWQYRPWNFGDLLCKL. C115 and C197 are oxidised to a cystine. The chain crosses the membrane as a helical span at residues 118-139; sequence FQFVSESCTYATVLTITALSVE. Topologically, residues 140 to 162 are cytoplasmic; sequence RYFAICFPLRAKVVVTKGRVKLV. Residues 163–183 form a helical membrane-spanning segment; that stretch reads ILVIWAVAFCSAGPIFVLVGV. The Extracellular portion of the chain corresponds to 184–211; sequence EHENGTDPRDTNECRATEFAVRSGLLTV. N187 carries N-linked (GlcNAc...) asparagine glycosylation. Residues 212 to 235 traverse the membrane as a helical segment; the sequence is MVWVSSVFFFLPVFCLTVLYSLIG. At 236 to 263 the chain is on the cytoplasmic side; the sequence is RKLWRRRGDAAVGSSLRDQNHKQTVKML. A helical membrane pass occupies residues 264-285; the sequence is AVVVFAFILCWLPFHVGRYLFS. The Extracellular portion of the chain corresponds to 286-302; it reads KSFEPGSLEIAQISQYC. A helical membrane pass occupies residues 303-326; sequence NLVSFVLFYLSAAINPILYNIMSK. Residues 327–364 lie on the Cytoplasmic side of the membrane; it reads KYRVAVFKLLGFESFSQRKLSTLKDESSRAWTKSSINT.

It belongs to the G-protein coupled receptor 1 family.

The protein resides in the cell membrane. Functionally, receptor for ghrelin, coupled to G-alpha-11 proteins. Stimulates growth hormone secretion. Also binds other growth hormone releasing peptides (GHRP) (e.g. Met-enkephalin and GHRP-6) as well as non-peptide, low molecular weight secretagogues (e.g. L-692,429, MK-0677, adenosine). The polypeptide is Growth hormone secretagogue receptor type 1 (Ghsr) (Mus musculus (Mouse)).